The chain runs to 149 residues: Calmodulin (149 aa).

Residue Ala-2 is modified to N-acetylalanine. EF-hand domains are found at residues 8–43, 44–79, 81–116, and 117–149; these read EQIA…LGQN, PTEA…KMKD, DSEE…LGEK, and LTDE…MMAK. Asp-21, Asp-23, Asp-25, Cys-27, Glu-32, Asp-57, Asp-59, Asn-61, Thr-63, Glu-68, Asp-94, Asp-96, Asn-98, and Glu-105 together coordinate Ca(2+). Lys-116 bears the N6,N6,N6-trimethyllysine mark. Ca(2+) is bound by residues Asp-130, Asp-132, Asp-134, Gln-136, and Glu-141.

It belongs to the calmodulin family. Post-translationally, the N-terminus is blocked.

Functionally, calmodulin mediates the control of a large number of enzymes, ion channels and other proteins by Ca(2+). Among the enzymes to be stimulated by the calmodulin-Ca(2+) complex are a number of protein kinases and phosphatases. The protein is Calmodulin of Spinacia oleracea (Spinach).